Here is a 759-residue protein sequence, read N- to C-terminus: Inhibitor of nuclear factor kappa-B kinase subunit alpha (759 aa).

A disordered region spans residues 1–20 (MERGAERGPPPAPGGVALRG). In terms of domain architecture, Protein kinase spans 29 to 316 (WEMRDRLGTG…PETNSPKCFL (288 aa)). ATP contacts are provided by residues 35 to 43 (LGTGGFGNV) and lysine 58. The active-site Proton acceptor is aspartate 158. Residues 469-490 (LLRYNANLIKMKNNMVSASQQL) form a leucine-zipper region. The segment covering 691 to 703 (TPAATWVPQSSSE) has biased composition (polar residues). Residues 691–715 (TPAATWVPQSSSEYAPHPLSSMATP) form a disordered region. The segment at 753 to 758 (FDWSWL) is NEMO-binding.

This sequence belongs to the protein kinase superfamily. Ser/Thr protein kinase family. I-kappa-B kinase subfamily.

The protein localises to the cytoplasm. It is found in the nucleus. It catalyses the reaction L-seryl-[I-kappa-B protein] + ATP = O-phospho-L-seryl-[I-kappa-B protein] + ADP + H(+). Activated when phosphorylated and inactivated when dephosphorylated. Functionally, phosphorylates inhibitors of NF-kappa-B thus leading to the dissociation of the inhibitor/NF-kappa-B complex and ultimately the degradation of the inhibitor. Phosphorylates 'Ser-10' of histone H3 at NF-kappa-B-regulated promoters during inflammatory responses triggered by cytokines. The chain is Inhibitor of nuclear factor kappa-B kinase subunit alpha (CHUK) from Gallus gallus (Chicken).